Here is a 980-residue protein sequence, read N- to C-terminus: Valine--tRNA ligase (980 aa).

The 'HIGH' region signature appears at P43–H53. The 'KMSKS' region motif lies at K586–S590. K589 serves as a coordination point for ATP. Positions L914 to A978 form a coiled coil.

Belongs to the class-I aminoacyl-tRNA synthetase family. ValS type 1 subfamily. In terms of assembly, monomer.

The protein localises to the cytoplasm. It carries out the reaction tRNA(Val) + L-valine + ATP = L-valyl-tRNA(Val) + AMP + diphosphate. In terms of biological role, catalyzes the attachment of valine to tRNA(Val). As ValRS can inadvertently accommodate and process structurally similar amino acids such as threonine, to avoid such errors, it has a 'posttransfer' editing activity that hydrolyzes mischarged Thr-tRNA(Val) in a tRNA-dependent manner. The protein is Valine--tRNA ligase of Xanthomonas euvesicatoria pv. vesicatoria (strain 85-10) (Xanthomonas campestris pv. vesicatoria).